Consider the following 425-residue polypeptide: GPI mannosyltransferase 1 (425 aa).

The next 9 helical transmembrane spans lie at 11–31 (VIGASIALRAVLLVYGAWQDA), 85–105 (FFAFGKALFALADVVAGWLIA), 144–164 (LLGVLVVGLLWAVLSRRVSLA), 166–186 (VILGLGVHFKIYPFIYGPAVV), 233–253 (IHLTLVALATFSALNVSMYIL), 295–315 (FESLAFIPQLLLSVVVIPLVL), 340–360 (SQYFLWYLIFLPFYLPSSSLM), 367–387 (ILVGLLWVIAQALWLQQGYNL), and 398–418 (GLFLASLFFFAVNVWILGIIV).

The protein belongs to the PIGM family.

It localises to the endoplasmic reticulum membrane. The protein operates within glycolipid biosynthesis; glycosylphosphatidylinositol-anchor biosynthesis. In terms of biological role, mannosyltransferase involved in glycosylphosphatidylinositol-anchor biosynthesis. Transfers the first alpha-1,4-mannose to GlcN-acyl-PI during GPI precursor assembly. Required for cell wall integrity. The protein is GPI mannosyltransferase 1 (gpi14) of Aspergillus fumigatus (strain ATCC MYA-4609 / CBS 101355 / FGSC A1100 / Af293) (Neosartorya fumigata).